The chain runs to 222 residues: CEACAM1-like protein UL7 (222 aa).

N-linked (GlcNAc...) asparagine; by host glycosylation is found at N50, N56, N60, N71, N105, N109, N125, N132, N147, N164, N168, and N189. Residues 193–213 (LALVGVVVFLVLIVVCIMGWW) form a helical membrane-spanning segment.

It belongs to the RL11 family. In terms of processing, highly glycosylated.

It is found in the secreted. It localises to the host cell membrane. Its function is as follows. Plays a role in modulating the host immune response and affecting host cytokine production. Structurally and functionally homolog of host CEACAM1, induces endothelial cell angiogenesis. The sequence is that of CEACAM1-like protein UL7 (UL7) from Homo sapiens (Human).